Here is a 215-residue protein sequence, read N- to C-terminus: Redox-sensing transcriptional repressor Rex 2 (215 aa).

Residues 15-54 (VYLRYLKMLGDSGVKRIKSREFSEMIQIPSATIRRDFSHV) constitute a DNA-binding region (H-T-H motif). Residue 89–94 (GCGNLG) coordinates NAD(+).

It belongs to the transcriptional regulatory Rex family. In terms of assembly, homodimer.

Its subcellular location is the cytoplasm. In terms of biological role, modulates transcription in response to changes in cellular NADH/NAD(+) redox state. The polypeptide is Redox-sensing transcriptional repressor Rex 2 (Enterococcus faecalis (strain ATCC 700802 / V583)).